The following is a 327-amino-acid chain: GMP reductase (327 aa).

Catalysis depends on Cys176, which acts as the Thioimidate intermediate. 205–228 lines the NADP(+) pocket; it reads IIADGGIRTHGDIAKSIRFGASMV.

Belongs to the IMPDH/GMPR family. GuaC type 2 subfamily.

It carries out the reaction IMP + NH4(+) + NADP(+) = GMP + NADPH + 2 H(+). In terms of biological role, catalyzes the irreversible NADPH-dependent deamination of GMP to IMP. It functions in the conversion of nucleobase, nucleoside and nucleotide derivatives of G to A nucleotides, and in maintaining the intracellular balance of A and G nucleotides. This Streptococcus agalactiae serotype V (strain ATCC BAA-611 / 2603 V/R) protein is GMP reductase.